We begin with the raw amino-acid sequence, 847 residues long: Pollen-specific leucine-rich repeat extensin-like protein 2 (847 aa).

An N-terminal signal peptide occupies residues 1-20; it reads MERPFGCFFILLLISYTVVA. LRR repeat units lie at residues 45–71, 106–130, 131–153, 155–178, 179–202, 204–224, 226–248, and 249–273; these read INKVDPNLKFENDRLKRAYIALQAWKK, LTVVAGVDLNHADIAGHLPPELGLM, TDLALFHINSNRFCGIIPKSLSK, ALMYEFDVSNNRFVGQFPEVSLSW, PSLKFLDLRYNEFEGSLPSEIFDK, LDAIFLNNNRFESVIPGTIGK, KASVVTFANNKFSGCIPKSIGNM, and KNLNEIVFTGNNLTGCFPNEIGLLN. N260 and N274 each carry an N-linked (GlcNAc...) asparagine glycan. 2 LRR repeats span residues 296 to 319 and 321 to 343; these read LASVEQLDLSHNKLTGFVVDKFCK and PNLDSFKFSYNFFNGEAESCVPG. A disordered region spans residues 381 to 847; it reads KDKCSGGSNG…SPPPPMFQGY (467 aa). Residues 438-484 show a composition bias toward basic and acidic residues; the sequence is PKHESPKPEEPENKHELPKQKESPKPQPSKPEDSPKPEQPKPEESPK. 2 stretches are compositionally biased toward pro residues: residues 485–499 and 533–642; these read PEQPQIPEPTKPVSP and VPPP…PPPT. The interval 522 to 847 is contains the Ser-Pro(4) repeats; that stretch reads SPPPPKVEDT…SPPPPMFQGY (326 aa). Polar residues-rich tracts occupy residues 667 to 682, 688 to 720, and 726 to 752; these read QVPTPSSESDQSQILS, TPVQSSTPSSEPTQVPTPSSSESYQAPNLSPVQ, and QAPTTSSETSQVPTPSSESNQSPSQAP. Low complexity-rich tracts occupy residues 768–783 and 797–811; these read PVQSPTPSSEPVSSPE and NPSSVPSSSPSTDTS. Pro residues predominate over residues 838-847; sequence SPPPPMFQGY.

In terms of processing, hydroxylated on proline residues in the S-P-P-P-P repeat. O-glycosylated on hydroxyprolines. As to expression, expressed in flowers, stamen, pollen, and pollinated carpels (at protein level).

The protein resides in the secreted. It localises to the cell wall. Functionally, modulates cell morphogenesis by regulating cell wall formation and assembly, and/or growth polarization. The chain is Pollen-specific leucine-rich repeat extensin-like protein 2 (PEX2) from Arabidopsis thaliana (Mouse-ear cress).